The chain runs to 605 residues: DNA primase (605 aa).

Residues 39–63 (CPFHHERTPSFHVVPDKKMYYCFGC) form a CHC2-type zinc finger. The region spanning 257–338 (RAAIICEGYM…EVRIVELNGG (82 aa)) is the Toprim domain. Mg(2+) contacts are provided by Glu263, Asp307, and Asp309.

Belongs to the DnaG primase family. As to quaternary structure, monomer. Interacts with DnaB. Zn(2+) serves as cofactor. Mg(2+) is required as a cofactor.

It catalyses the reaction ssDNA + n NTP = ssDNA/pppN(pN)n-1 hybrid + (n-1) diphosphate.. Functionally, RNA polymerase that catalyzes the synthesis of short RNA molecules used as primers for DNA polymerase during DNA replication. The polypeptide is DNA primase (Treponema pallidum (strain Nichols)).